A 79-amino-acid polypeptide reads, in one-letter code: Acyl carrier protein (79 aa).

A Carrier domain is found at 2 to 77 (DNIEQRVKKI…QAIDYATAHV (76 aa)). Position 37 is an O-(pantetheine 4'-phosphoryl)serine (serine 37).

It belongs to the acyl carrier protein (ACP) family. In terms of processing, 4'-phosphopantetheine is transferred from CoA to a specific serine of apo-ACP by AcpS. This modification is essential for activity because fatty acids are bound in thioester linkage to the sulfhydryl of the prosthetic group.

Its subcellular location is the cytoplasm. The protein operates within lipid metabolism; fatty acid biosynthesis. In terms of biological role, carrier of the growing fatty acid chain in fatty acid biosynthesis. The sequence is that of Acyl carrier protein from Cupriavidus pinatubonensis (strain JMP 134 / LMG 1197) (Cupriavidus necator (strain JMP 134)).